A 323-amino-acid chain; its full sequence is Beta-ketoacyl-[acyl-carrier-protein] synthase III (323 aa).

Residues Cys-113 and His-250 contribute to the active site. The ACP-binding stretch occupies residues 251–255 (QANKR). Asn-280 is an active-site residue.

This sequence belongs to the thiolase-like superfamily. FabH family. As to quaternary structure, homodimer.

It localises to the cytoplasm. The enzyme catalyses malonyl-[ACP] + acetyl-CoA + H(+) = 3-oxobutanoyl-[ACP] + CO2 + CoA. It participates in lipid metabolism; fatty acid biosynthesis. Functionally, catalyzes the condensation reaction of fatty acid synthesis by the addition to an acyl acceptor of two carbons from malonyl-ACP. Catalyzes the first condensation reaction which initiates fatty acid synthesis and may therefore play a role in governing the total rate of fatty acid production. Possesses both acetoacetyl-ACP synthase and acetyl transacylase activities. Its substrate specificity determines the biosynthesis of branched-chain and/or straight-chain of fatty acids. This is Beta-ketoacyl-[acyl-carrier-protein] synthase III from Chelativorans sp. (strain BNC1).